A 107-amino-acid chain; its full sequence is Phosphoribosyl-ATP pyrophosphatase 1 (107 aa).

Belongs to the PRA-PH family.

It localises to the cytoplasm. It carries out the reaction 1-(5-phospho-beta-D-ribosyl)-ATP + H2O = 1-(5-phospho-beta-D-ribosyl)-5'-AMP + diphosphate + H(+). It participates in amino-acid biosynthesis; L-histidine biosynthesis; L-histidine from 5-phospho-alpha-D-ribose 1-diphosphate: step 2/9. The sequence is that of Phosphoribosyl-ATP pyrophosphatase 1 (hisE1) from Rhodopseudomonas palustris (strain ATCC BAA-98 / CGA009).